Reading from the N-terminus, the 289-residue chain is MYFLTPILVAILCILVVWIFKNADRSMEKKKGEARTRAEARPWVDEDLKDSSDLHQAEEDADEWQESEENVEHIPFSHTHYPEKEMVKRSREFYELLNKRRSVRFISNEQVPMEVIDNVIRTAGTAPSGAHTEPWTFVVVKDPDVKHKIRKIIEGEEEINYMKRMGHRWVTDLKKLRTNWIKEYLDTAPILILIFKQVHGFVANGKKKVHYYNEISVSIACGILLAALQNAGLVTVTTTPLNCGPRLRVLLGRPAHEKLLMLLPVGYPSKEAMVPDLKRKPLDQIMVMV.

A helical membrane pass occupies residues 1–21; sequence MYFLTPILVAILCILVVWIFK. Over residues 47 to 58 the composition is skewed to basic and acidic residues; the sequence is DLKDSSDLHQAE. The interval 47-69 is disordered; it reads DLKDSSDLHQAEEDADEWQESEE. Residues 59-69 show a composition bias toward acidic residues; sequence EDADEWQESEE. Residues 100–104, serine 128, and 128–129 contribute to the FMN site; these read RRSVR and SG. 3,5-diiodo-L-tyrosine is bound by residues alanine 130, glutamate 157, tyrosine 161, and lysine 182. Residues alanine 130, glutamate 157, tyrosine 161, and lysine 182 each coordinate 3-iodo-L-tyrosine. FMN contacts are provided by residues 237 to 239 and arginine 279; that span reads TTT.

This sequence belongs to the nitroreductase family. Homodimer. It depends on FMN as a cofactor.

Its subcellular location is the cell membrane. It localises to the cytoplasmic vesicle membrane. The enzyme catalyses 2 iodide + L-tyrosine + 2 NADP(+) = 3,5-diiodo-L-tyrosine + 2 NADPH + H(+). The catalysed reaction is iodide + L-tyrosine + NADP(+) = 3-iodo-L-tyrosine + NADPH. It catalyses the reaction 3-iodo-L-tyrosine + iodide + NADP(+) = 3,5-diiodo-L-tyrosine + NADPH + H(+). It carries out the reaction L-tyrosine + chloride + NADP(+) = 3-chloro-L-tyrosine + NADPH. The enzyme catalyses bromide + L-tyrosine + NADP(+) = 3-bromo-L-tyrosine + NADPH. Functionally, catalyzes the dehalogenation of halotyrosines such as 3-bromo-L-tyrosine, 3-chloro-L-tyrosine, 3-iodo-L-tyrosine and 3,5-diiodo-L-tyrosine. During thyroid hormone biosynthesis, facilitates iodide salvage by catalysing the oxidative NADPH-dependent deiodination of the halogenated by-products of thyroid hormone production, monoiodotyrosine (L-MIT) and diiodotyrosine (L-DIT). The scavanged iodide can then reenter the hormone-producing pathways. Acts more efficiently on 3-iodo-L-tyrosine than 3,5-diiodo-L-tyrosine. The chain is Iodotyrosine deiodinase 1 (IYD) from Pongo abelii (Sumatran orangutan).